A 90-amino-acid chain; its full sequence is UPF0335 protein R02793 (90 aa).

It belongs to the UPF0335 family.

This Rhizobium meliloti (strain 1021) (Ensifer meliloti) protein is UPF0335 protein R02793.